The sequence spans 510 residues: Probable cytosol aminopeptidase (510 aa).

Lys254 and Asp259 together coordinate Mn(2+). Lys266 is a catalytic residue. Asp277, Asp336, and Glu338 together coordinate Mn(2+). The active site involves Arg340. Positions 487–510 (AQPVKASPKTRPARKSTPAAKTRA) are disordered.

This sequence belongs to the peptidase M17 family. Mn(2+) serves as cofactor.

It is found in the cytoplasm. The enzyme catalyses Release of an N-terminal amino acid, Xaa-|-Yaa-, in which Xaa is preferably Leu, but may be other amino acids including Pro although not Arg or Lys, and Yaa may be Pro. Amino acid amides and methyl esters are also readily hydrolyzed, but rates on arylamides are exceedingly low.. The catalysed reaction is Release of an N-terminal amino acid, preferentially leucine, but not glutamic or aspartic acids.. Its function is as follows. Presumably involved in the processing and regular turnover of intracellular proteins. Catalyzes the removal of unsubstituted N-terminal amino acids from various peptides. This chain is Probable cytosol aminopeptidase, found in Polaromonas naphthalenivorans (strain CJ2).